The chain runs to 770 residues: Glutamate carboxypeptidase 2 homolog (770 aa).

The Cytoplasmic segment spans residues 1-19; sequence MPYVGVGAQKASTNLTGGP. The chain crosses the membrane as a helical; Signal-anchor for type II membrane protein span at residues 20–40; it reads MMKAYAFVLAFFLLGLGVLAL. At 41-770 the chain is on the extracellular side; sequence GKHHSGRRFN…CVVNTLRDVI (730 aa). 2 N-linked (GlcNAc...) asparagine glycosylation sites follow: Asn-175 and Asn-337. The catalytic stretch occupies residues 282-597; the sequence is SKKELFKGRT…QYWAELAKTF (316 aa). The Zn(2+) site is built by His-387 and Asp-397. An N-linked (GlcNAc...) asparagine glycan is attached at Asn-417. Glu-435 functions as the Nucleophile in the catalytic mechanism. Zn(2+)-binding residues include Glu-436 and Asp-464. Residues Asn-469 and Asn-551 are each glycosylated (N-linked (GlcNAc...) asparagine). Zn(2+) is bound at residue His-562. N-linked (GlcNAc...) asparagine glycans are attached at residues Asn-606 and Asn-630.

It belongs to the peptidase M28 family. M28B subfamily. Zn(2+) serves as cofactor.

The protein localises to the membrane. The catalysed reaction is Release of an unsubstituted, C-terminal glutamyl residue, typically from Ac-Asp-Glu or folylpoly-gamma-glutamates.. This chain is Glutamate carboxypeptidase 2 homolog, found in Caenorhabditis briggsae.